The sequence spans 226 residues: Protein pdh1 (226 aa).

The first 26 residues, 1-26, serve as a signal peptide directing secretion; that stretch reads MNHFSKFSVTKRLLILEVLFSAISFG. At 27 to 41 the chain is on the extracellular side; that stretch reads ISIYIKVFGRSSIVT. The helical transmembrane segment at 42–62 threads the bilayer; the sequence is FFLLCFHLVPNALFLFPWTII. At 63-65 the chain is on the cytoplasmic side; that stretch reads TTS. The chain crosses the membrane as a helical span at residues 66 to 86; sequence FVDANVFTLLSSILILSVYGV. Over 87–97 the chain is Extracellular; the sequence is EIERSWGHKEY. A helical transmembrane segment spans residues 98–118; it reads LLFCQFLTVIPNIAVLIPCFI. The Cytoplasmic portion of the chain corresponds to 119-191; it reads AYKITDSHYL…VFQSFPWTYF (73 aa). A helical membrane pass occupies residues 192–212; sequence CLAVSGTCISELYVLFVHPVV. Over 213–226 the chain is Extracellular; sequence QELFHLESHTQLPI.

The protein localises to the membrane. The polypeptide is Protein pdh1 (pdh1) (Schizosaccharomyces pombe (strain 972 / ATCC 24843) (Fission yeast)).